The chain runs to 255 residues: Type III pantothenate kinase (255 aa).

6-13 (DVGNTNIV) serves as a coordination point for ATP. Substrate contacts are provided by residues Tyr-100 and 107 to 110 (GADR). Asp-109 functions as the Proton acceptor in the catalytic mechanism. Residue Asp-129 participates in K(+) binding. Thr-132 provides a ligand contact to ATP. Substrate is bound at residue Thr-184.

It belongs to the type III pantothenate kinase family. Homodimer. It depends on NH4(+) as a cofactor. Requires K(+) as cofactor.

The protein localises to the cytoplasm. The enzyme catalyses (R)-pantothenate + ATP = (R)-4'-phosphopantothenate + ADP + H(+). It participates in cofactor biosynthesis; coenzyme A biosynthesis; CoA from (R)-pantothenate: step 1/5. Its function is as follows. Catalyzes the phosphorylation of pantothenate (Pan), the first step in CoA biosynthesis. The polypeptide is Type III pantothenate kinase (Caldanaerobacter subterraneus subsp. tengcongensis (strain DSM 15242 / JCM 11007 / NBRC 100824 / MB4) (Thermoanaerobacter tengcongensis)).